The following is a 249-amino-acid chain: MAKKKDTPGDGEFPGFSDTLQRTPKLEKPHYAGHRDRLKQRFRDAPDALADYELLELLLFRAIRRADTKPIAKALLNRFGSIAEVLAAPENLIAEIPGAGPTVALELKLVEAIAKRSARSTVMEREVLGSWDKVINYCTAAMAFETREQFRILFLDKKNKLIADEVQQTGTVDHTPVYPREVVKRALELSATAIILVHNHPSGDPTPSRADIDMTKQLVNAAKALNITVHDHVIIGKHGHASLRSLRLI.

A disordered region spans residues 1 to 34 (MAKKKDTPGDGEFPGFSDTLQRTPKLEKPHYAGH). Positions 24–34 (PKLEKPHYAGH) are enriched in basic and acidic residues. The region spanning 127–249 (VLGSWDKVIN…HASLRSLRLI (123 aa)) is the MPN domain. Residues His-198, His-200, and Asp-211 each contribute to the Zn(2+) site. The short motif at 198 to 211 (HNHPSGDPTPSRAD) is the JAMM motif element.

It belongs to the UPF0758 family.

The sequence is that of UPF0758 protein BMEI0718 from Brucella melitensis biotype 1 (strain ATCC 23456 / CCUG 17765 / NCTC 10094 / 16M).